A 201-amino-acid chain; its full sequence is Large ribosomal subunit protein uL4 (201 aa).

The tract at residues 46 to 71 (QKTRAEITGTGKKPWRQKGTGRARAG) is disordered.

It belongs to the universal ribosomal protein uL4 family. As to quaternary structure, part of the 50S ribosomal subunit.

Its function is as follows. One of the primary rRNA binding proteins, this protein initially binds near the 5'-end of the 23S rRNA. It is important during the early stages of 50S assembly. It makes multiple contacts with different domains of the 23S rRNA in the assembled 50S subunit and ribosome. Forms part of the polypeptide exit tunnel. This is Large ribosomal subunit protein uL4 from Shewanella amazonensis (strain ATCC BAA-1098 / SB2B).